Reading from the N-terminus, the 241-residue chain is Pyridoxine/pyridoxamine 5'-phosphate oxidase (241 aa).

The interval 1–35 (MASNPPSAASPRRTAVSPGADRPDGPDPAGQRQSY) is disordered. Substrate contacts are provided by residues 32 to 35 (RQSY) and lysine 92. FMN-binding positions include 87-92 (RTVLLK), 102-103 (YT), arginine 108, lysine 109, and glutamine 131. Substrate is bound by residues tyrosine 149, arginine 153, and serine 157. FMN contacts are provided by residues 166 to 167 (QS) and tryptophan 212. 218–220 (RLH) contributes to the substrate binding site. An FMN-binding site is contributed by arginine 222.

The protein belongs to the pyridoxamine 5'-phosphate oxidase family. Homodimer. FMN serves as cofactor.

The catalysed reaction is pyridoxamine 5'-phosphate + O2 + H2O = pyridoxal 5'-phosphate + H2O2 + NH4(+). It carries out the reaction pyridoxine 5'-phosphate + O2 = pyridoxal 5'-phosphate + H2O2. It participates in cofactor metabolism; pyridoxal 5'-phosphate salvage; pyridoxal 5'-phosphate from pyridoxamine 5'-phosphate: step 1/1. Its pathway is cofactor metabolism; pyridoxal 5'-phosphate salvage; pyridoxal 5'-phosphate from pyridoxine 5'-phosphate: step 1/1. Catalyzes the oxidation of either pyridoxine 5'-phosphate (PNP) or pyridoxamine 5'-phosphate (PMP) into pyridoxal 5'-phosphate (PLP). This is Pyridoxine/pyridoxamine 5'-phosphate oxidase from Frankia alni (strain DSM 45986 / CECT 9034 / ACN14a).